The following is a 368-amino-acid chain: D-alanine--D-alanine ligase (368 aa).

Positions 151–358 (KKLLAAEGLP…YRTLISTLVD (208 aa)) constitute an ATP-grasp domain. Residue 179–234 (KAELGLPVFVKPARGGSSIGITRVSNWDGLDGAIAHARLHDPKVIVEGAIIGREVE) coordinates ATP. Residues aspartate 313, glutamate 325, and asparagine 327 each contribute to the Mg(2+) site.

Belongs to the D-alanine--D-alanine ligase family. Mg(2+) is required as a cofactor. Requires Mn(2+) as cofactor.

The protein resides in the cytoplasm. The catalysed reaction is 2 D-alanine + ATP = D-alanyl-D-alanine + ADP + phosphate + H(+). The protein operates within cell wall biogenesis; peptidoglycan biosynthesis. In terms of biological role, cell wall formation. In Rhodococcus erythropolis (strain PR4 / NBRC 100887), this protein is D-alanine--D-alanine ligase.